Here is a 141-residue protein sequence, read N- to C-terminus: Hemoglobin subunit alpha (141 aa).

The Globin domain maps to 1-141; sequence VLSSTDKSNV…VSTVLTSKYR (141 aa). Ser3 is modified (phosphoserine). Lys7 and Lys11 each carry N6-succinyllysine. Residue Lys16 is modified to N6-acetyllysine; alternate. Lys16 carries the N6-succinyllysine; alternate modification. Phosphotyrosine is present on Tyr24. Ser35 bears the Phosphoserine mark. Residue Lys40 is modified to N6-succinyllysine. His58 serves as a coordination point for O2. A heme b-binding site is contributed by His87. Ser102 is subject to Phosphoserine. Residue Thr108 is modified to Phosphothreonine. A phosphoserine mark is found at Ser124 and Ser131. 2 positions are modified to phosphothreonine: Thr134 and Thr137. Ser138 is modified (phosphoserine).

Belongs to the globin family. As to quaternary structure, heterotetramer of two alpha chains and two beta chains. As to expression, red blood cells.

Its function is as follows. Involved in oxygen transport from the lung to the various peripheral tissues. Hemopressin acts as an antagonist peptide of the cannabinoid receptor CNR1. Hemopressin-binding efficiently blocks cannabinoid receptor CNR1 and subsequent signaling. This Pteropus poliocephalus (Grey-headed flying fox) protein is Hemoglobin subunit alpha (HBA).